The following is a 171-amino-acid chain: Regulatory protein RecX (171 aa).

Belongs to the RecX family.

Its subcellular location is the cytoplasm. In terms of biological role, modulates RecA activity. The chain is Regulatory protein RecX from Mycobacterium leprae (strain Br4923).